The following is an 85-amino-acid chain: MHQENLLALIALSALCLINVLIWLFNLRIYLVQRKQDRREQEILERLRRIKEIRDDSDYESNEEEQQEVMELIHSHGFANPMFEL.

Topologically, residues 1 to 7 are extracellular; sequence MHQENLL. A helical transmembrane segment spans residues 8 to 28; the sequence is ALIALSALCLINVLIWLFNLR. At 29 to 85 the chain is on the cytoplasmic side; it reads IYLVQRKQDRREQEILERLRRIKEIRDDSDYESNEEEQQEVMELIHSHGFANPMFEL.

This sequence belongs to the HIV-1 VPU protein family. In terms of assembly, homopentamer. Interacts with host CD4 and BRTC; these interactions induce proteasomal degradation of CD4. Interacts with host BST2; this interaction leads to the degradation of host BST2. Interacts with host FBXW11. Interacts with host AP1M1; this interaction plays a role in the mistrafficking and subsequent degradation of host BST2. Interacts with host RANBP2; this interaction allows Vpu to down-regulate host BLM sumoylation. Post-translationally, phosphorylated by host CK2. This phosphorylation is necessary for interaction with human BTRC and degradation of CD4.

Its subcellular location is the host membrane. Its activity is regulated as follows. Ion channel activity is inhibited by hexamethylene amiloride in vitro. Functionally, enhances virion budding by targeting host CD4 and Tetherin/BST2 to proteasome degradation. Degradation of CD4 prevents any unwanted premature interactions between viral Env and its host receptor CD4 in the endoplasmic reticulum. Degradation of antiretroviral protein Tetherin/BST2 is important for virion budding, as BST2 tethers new viral particles to the host cell membrane. Mechanistically, Vpu bridges either CD4 or BST2 to BTRC, a substrate recognition subunit of the Skp1/Cullin/F-box protein E3 ubiquitin ligase, induces their ubiquitination and subsequent proteasomal degradation. The alteration of the E3 ligase specificity by Vpu seems to promote the degradation of host IKBKB, leading to NF-kappa-B down-regulation and subsequent apoptosis. Acts as a viroporin that forms an oligomeric ion channel in membranes. Modulates the host DNA repair mechanisms to promote degradation of nuclear viral cDNA in cells that are already productively infected in order to suppress immune sensing and proviral hyper-integration (superinfection). Manipulates PML-NBs and modulates SUMOylation of host BLM protein thereby enhancing its DNA-end processing activity toward viral unintegrated linear DNA. Also inhibits RAD52-mediated homologous repair of viral cDNA, preventing the generation of dead-end circular forms of single copies of the long terminal repeat and permitting sustained nucleolytic attack. The protein is Protein Vpu of Human immunodeficiency virus type 1 group O (isolate MVP5180) (HIV-1).